A 234-amino-acid chain; its full sequence is DNA repair protein RecO (234 aa).

Belongs to the RecO family.

Its function is as follows. Involved in DNA repair and RecF pathway recombination. The protein is DNA repair protein RecO of Alteromonas mediterranea (strain DSM 17117 / CIP 110805 / LMG 28347 / Deep ecotype).